The following is a 1048-amino-acid chain: Probable histidine kinase 2 (1048 aa).

At 1-16 (MREVEEVSKWRRRCCY) the chain is on the cytoplasmic side. Residues 17 to 37 (FWILFPLAVIATCMTITVVTF) traverse the membrane as a helical segment. The Extracellular segment spans residues 38–336 (CSSTMYMTEV…AMVGVFRRGG (299 aa)). A helical membrane pass occupies residues 337–357 (VTMVAVACAAAAAATVACVLM). The Cytoplasmic segment spans residues 358-1048 (ARALRRAVAR…AVHGVCKGKN (691 aa)). One can recognise a Histidine kinase domain in the interval 398-662 (SASHDIRSAL…CFGFNVLLKT (265 aa)). Residue His401 is modified to Phosphohistidine; by autocatalysis. One can recognise a Response regulatory domain in the interval 912–1044 (HVLLVEDTLV…RIVEAVHGVC (133 aa)). Position 975 is a 4-aspartylphosphate (Asp975).

In terms of processing, activation probably requires a transfer of a phosphate group between a His in the transmitter domain and an Asp of the receiver domain.

It localises to the cell membrane. It carries out the reaction ATP + protein L-histidine = ADP + protein N-phospho-L-histidine.. Functionally, cytokinin receptor related to bacterial two-component regulators. Functions as a histidine kinase and transmits the stress signal to a downstream MAPK cascade. This chain is Probable histidine kinase 2, found in Oryza sativa subsp. indica (Rice).